The sequence spans 142 residues: MVLSPADKTNIKTTWDKLGGHAGEYGGEALERTFMSFPTTKTYFPHFDLSPGSAQVKAHGKKVADALTTAVAHMDDLPKALSALSDLHAYKLRVDPVNFKLLSHCLLVTLACHHPAEFTPAVHASLDKFFSTVSTVLTSKYR.

The Globin domain occupies Val2 to Arg142. An O2-binding site is contributed by His59. Residue His88 participates in heme b binding.

Belongs to the globin family. Heterotetramer of two alpha chains and two beta chains. Red blood cells.

Functionally, involved in oxygen transport from the lung to the various peripheral tissues. In Arctocephalus galapagoensis (Galapagoes fur seal), this protein is Hemoglobin subunit alpha-1.